The following is a 357-amino-acid chain: 3-isopropylmalate dehydrogenase (357 aa).

Gly75–Glu88 serves as a coordination point for NAD(+). 4 residues coordinate substrate: Arg96, Arg106, Arg134, and Asp222. The Mg(2+) site is built by Asp222, Asp246, and Asp250. Gly279–Asn291 is an NAD(+) binding site.

This sequence belongs to the isocitrate and isopropylmalate dehydrogenases family. LeuB type 1 subfamily. As to quaternary structure, homodimer. Mg(2+) serves as cofactor. It depends on Mn(2+) as a cofactor.

It is found in the cytoplasm. The enzyme catalyses (2R,3S)-3-isopropylmalate + NAD(+) = 4-methyl-2-oxopentanoate + CO2 + NADH. It functions in the pathway amino-acid biosynthesis; L-leucine biosynthesis; L-leucine from 3-methyl-2-oxobutanoate: step 3/4. Catalyzes the oxidation of 3-carboxy-2-hydroxy-4-methylpentanoate (3-isopropylmalate) to 3-carboxy-4-methyl-2-oxopentanoate. The product decarboxylates to 4-methyl-2 oxopentanoate. The sequence is that of 3-isopropylmalate dehydrogenase from Moorella thermoacetica (strain ATCC 39073 / JCM 9320).